We begin with the raw amino-acid sequence, 422 residues long: Serine--tRNA ligase (422 aa).

226–228 (TSE) is an L-serine binding site. Residues 257–259 (RRE) and Val273 each bind ATP. Glu280 is a binding site for L-serine. An ATP-binding site is contributed by 344 to 347 (ELTS). Residue Thr379 participates in L-serine binding.

Belongs to the class-II aminoacyl-tRNA synthetase family. Type-1 seryl-tRNA synthetase subfamily. As to quaternary structure, homodimer. The tRNA molecule binds across the dimer.

The protein localises to the cytoplasm. It carries out the reaction tRNA(Ser) + L-serine + ATP = L-seryl-tRNA(Ser) + AMP + diphosphate + H(+). The catalysed reaction is tRNA(Sec) + L-serine + ATP = L-seryl-tRNA(Sec) + AMP + diphosphate + H(+). It functions in the pathway aminoacyl-tRNA biosynthesis; selenocysteinyl-tRNA(Sec) biosynthesis; L-seryl-tRNA(Sec) from L-serine and tRNA(Sec): step 1/1. In terms of biological role, catalyzes the attachment of serine to tRNA(Ser). Is also able to aminoacylate tRNA(Sec) with serine, to form the misacylated tRNA L-seryl-tRNA(Sec), which will be further converted into selenocysteinyl-tRNA(Sec). The sequence is that of Serine--tRNA ligase from Corynebacterium glutamicum (strain ATCC 13032 / DSM 20300 / JCM 1318 / BCRC 11384 / CCUG 27702 / LMG 3730 / NBRC 12168 / NCIMB 10025 / NRRL B-2784 / 534).